The chain runs to 287 residues: Probable aquaporin PIP1-4 (287 aa).

Methionine 1 is subject to N-acetylmethionine. Positions 1 to 36 (MEGKEEDVRVGANKFPERQPIGTSAQSTDKDYKEPP) are disordered. The Cytoplasmic portion of the chain corresponds to 1–55 (MEGKEEDVRVGANKFPERQPIGTSAQSTDKDYKEPPPAPLFEPGELSSWSFYRAG). The chain crosses the membrane as a helical span at residues 56-76 (IAEFIATFLFLYITVLTVMGV). Topologically, residues 77–92 (KRAPNMCASVGIQGIA) are extracellular. Residues 93 to 113 (WAFGGMIFALVYCTAGISGGH) form a helical membrane-spanning segment. The Cytoplasmic segment spans residues 114-133 (INPAVTFGLFLARKLSLTRA). Positions 115–117 (NPA) match the NPA 1 motif. Residues 134–154 (VFYMIMQCLGAICGAGVVKGF) traverse the membrane as a helical segment. The Extracellular segment spans residues 155–175 (QPTPYQTLGGGANTVAHGYTK). The helical transmembrane segment at 176–196 (GSGLGAEIIGTFVLVYTVFSA) threads the bilayer. Over 197 to 209 (TDAKRSARDSHVP) the chain is Cytoplasmic. The helical transmembrane segment at 210–230 (ILAPLPIGFAVFLVHLATIPI) threads the bilayer. Residues 231–257 (TGTGINPARSLGAAIIYNKDHSWDDHW) lie on the Extracellular side of the membrane. The NPA 2 motif lies at 236–238 (NPA). Residues 258 to 278 (IFWVGPFIGAALAALYHQIVI) form a helical membrane-spanning segment. Topologically, residues 279–287 (RAIPFKSKS) are cytoplasmic. Serine 285 is modified (phosphoserine).

The protein belongs to the MIP/aquaporin (TC 1.A.8) family. PIP (TC 1.A.8.11) subfamily. In terms of tissue distribution, predominantly expressed in roots and green siliques. Also expressed above ground and in flower buds.

The protein resides in the cell membrane. Aquaporins facilitate the transport of water and small neutral solutes across cell membranes. The sequence is that of Probable aquaporin PIP1-4 (PIP1.4) from Arabidopsis thaliana (Mouse-ear cress).